The following is a 107-amino-acid chain: U1-lycotoxin-Ls1k (107 aa).

Positions 1–20 (MMKVLVVVALLVTLISYSSS) are cleaved as a signal peptide. Positions 21–41 (EGIDDLEADELLSLMANEQTR) are excised as a propeptide. 4 disulfides stabilise this stretch: cysteine 44–cysteine 59, cysteine 51–cysteine 68, cysteine 58–cysteine 86, and cysteine 70–cysteine 84.

Belongs to the neurotoxin 19 (CSTX) family. 04 (U1-Lctx) subfamily. In terms of tissue distribution, expressed by the venom gland.

It is found in the secreted. This Lycosa singoriensis (Wolf spider) protein is U1-lycotoxin-Ls1k.